Here is a 540-residue protein sequence, read N- to C-terminus: MAVILLLALALVLGCYCALHRHKLADIYLRPLLKNTLLEDFYHAELIQPEAPKRRRRGIWDIPGPKRIPFLGTKWIFLLFFRRYKMTKLHEVYADLNRQYGDIVLEVMPSNVPIVHLYNRDDLEKVLKYPSKYPFRPPTEIIVMYRQSRPDRYASVGIVNEQGPMWQRLRSSLTSSITSPRVLQNFLPALNAVCDDFIELLRARRDPDTLVVPNFEELANLMGLEAVCTLMLGRRMGFLAIDTKQPQKISQLAAAVKQLFISQRDSYYGLGLWKYFPTKTYRDFARAEDLIYDVISEIIDHELEELKKSAACEDDEAAGLRSIFLNILELKDLDIRDKKSAIIDFIAAGIETLANTLLFVLSSVTGDPGAMPRILSEFCEYRDTNILQDALTNATYTKACIQESYRLRPTAFCLARILEEDMELSGYSLNAGTVVLCQNMIACHKDSNFQGAKQFTPERWIDPATENFTVNVDNASIVVPFGVGRRSCPGKRFVEMEVVLLLAKMVLAFDVSFVKPLETEFEFLLAPKTPLSLRLSDRVF.

Cysteine 488 is a binding site for heme.

The protein belongs to the cytochrome P450 family. Heme is required as a cofactor. Strong expression by embryonic stage 10 in epidermis, decreases significantly in older embryos. Third instar larvae show expression in the midgut copper cells, Malpighian tubules and fat body. In the adult ovaries, expression is seen in both nurse cells and centripetally migrating follicle cells.

Its subcellular location is the mitochondrion membrane. It carries out the reaction ecdysone + AH2 + O2 = 20-hydroxyecdysone + A + H2O. It functions in the pathway steroid biosynthesis; ecdysteroid biosynthesis. In terms of biological role, required for CNS development; midline glial cells. Involved in the metabolism of insect hormones; responsible for all ecdysone 20-monooxygenase activity during embryonic, larval and adult stages. May be involved in the breakdown of synthetic insecticides. The protein is Ecdysone 20-monooxygenase (shd) of Drosophila melanogaster (Fruit fly).